The chain runs to 398 residues: MMGNKKIVLAYSGGLDTSVAVKWLTDKGFDVIADCMDVGEGKDLNFIHDKALQVGAVESVVLDCKEEFAKIFVGAALKGNLMYENKYPLVSALSRPLIAQKLVEVAKEKGATAIAHGCTGKGNDQVRFEVAIHSLAPELEVIAPVREWHWAREEEIEYANQNGVPIPADLDNPYSIDMNLWGRAIEAGVLENPWNTCPEDAFFMTNSVENAPNEAEFIEVEFKEGLPIALNGKSLELHEIIKKVNIIAGKHGIGRIDHIENRLVGIKSREFYECPAAITLLKAHKDLEDLTFVRELAHFKPVLENELANLIYNGLWFNPATKALIAYLDETQKVVNGIVKIKLYKGLATPVGRKSTNSLYSEKLATYTAADEFDQAAAVGFIKLWGLPTQVNAQVNLK.

Ala10–Ser18 is an ATP binding site. Residue Tyr87 coordinates L-citrulline. Gly117 serves as a coordination point for ATP. Positions 119, 123, and 124 each coordinate L-aspartate. Asn123 contributes to the L-citrulline binding site. Residues Arg127, Ser175, Glu260, and Tyr272 each coordinate L-citrulline.

The protein belongs to the argininosuccinate synthase family. Type 1 subfamily. Homotetramer.

It localises to the cytoplasm. It carries out the reaction L-citrulline + L-aspartate + ATP = 2-(N(omega)-L-arginino)succinate + AMP + diphosphate + H(+). The protein operates within amino-acid biosynthesis; L-arginine biosynthesis; L-arginine from L-ornithine and carbamoyl phosphate: step 2/3. This Lactococcus lactis subsp. lactis (strain IL1403) (Streptococcus lactis) protein is Argininosuccinate synthase.